We begin with the raw amino-acid sequence, 968 residues long: Glycine dehydrogenase (decarboxylating) (968 aa).

Residue Lys-712 is modified to N6-(pyridoxal phosphate)lysine.

The protein belongs to the GcvP family. The glycine cleavage system is composed of four proteins: P, T, L and H. Pyridoxal 5'-phosphate is required as a cofactor.

It carries out the reaction N(6)-[(R)-lipoyl]-L-lysyl-[glycine-cleavage complex H protein] + glycine + H(+) = N(6)-[(R)-S(8)-aminomethyldihydrolipoyl]-L-lysyl-[glycine-cleavage complex H protein] + CO2. Functionally, the glycine cleavage system catalyzes the degradation of glycine. The P protein binds the alpha-amino group of glycine through its pyridoxal phosphate cofactor; CO(2) is released and the remaining methylamine moiety is then transferred to the lipoamide cofactor of the H protein. This Prochlorococcus marinus (strain NATL1A) protein is Glycine dehydrogenase (decarboxylating).